Reading from the N-terminus, the 529-residue chain is Peptide chain release factor 3 (529 aa).

The tr-type G domain maps to 11-280; that stretch reads SKRRTFAIIS…SLIKWAPSPI (270 aa). Residues 20-27, 88-92, and 142-145 each bind GTP; these read SHPDAGKT, DTPGH, and NKLD.

The protein belongs to the TRAFAC class translation factor GTPase superfamily. Classic translation factor GTPase family. PrfC subfamily.

It localises to the cytoplasm. In terms of biological role, increases the formation of ribosomal termination complexes and stimulates activities of RF-1 and RF-2. It binds guanine nucleotides and has strong preference for UGA stop codons. It may interact directly with the ribosome. The stimulation of RF-1 and RF-2 is significantly reduced by GTP and GDP, but not by GMP. In Buchnera aphidicola subsp. Schizaphis graminum (strain Sg), this protein is Peptide chain release factor 3.